The primary structure comprises 152 residues: UPF0178 protein KPK_4355 (152 aa).

This sequence belongs to the UPF0178 family.

In Klebsiella pneumoniae (strain 342), this protein is UPF0178 protein KPK_4355.